Consider the following 185-residue polypeptide: Ribosome-recycling factor (185 aa).

This sequence belongs to the RRF family.

Its subcellular location is the cytoplasm. Functionally, responsible for the release of ribosomes from messenger RNA at the termination of protein biosynthesis. May increase the efficiency of translation by recycling ribosomes from one round of translation to another. This chain is Ribosome-recycling factor, found in Pseudomonas putida (strain W619).